The chain runs to 982 residues: Protein phosphatase 1 regulatory subunit 12B (982 aa).

Over residues 1 to 24 (MAELEHLGGKRAESARMRRAEQLR) the composition is skewed to basic and acidic residues. Positions 1–50 (MAELEHLGGKRAESARMRRAEQLRRWRGSLTEQEPAERRGAGRQPLTRRG) are disordered. Ser-29 bears the Phosphoserine mark. ANK repeat units lie at residues 57–86 (EDGA…DINT), 90–119 (DGLT…NVNQ), 123–152 (EGWT…SVGI), 216–245 (SGAT…ELNV), and 249–278 (DGWT…DMDI). 4 disordered regions span residues 342 to 517 (EETP…RESA), 556 to 579 (RTPH…SSTP), 606 to 864 (TDSS…EARE), and 918 to 948 (AQQK…KMSE). Acidic residues predominate over residues 362–374 (SEEEEGEDEASES). Residues 375 to 385 (ETEKEADKKPE) are compositionally biased toward basic and acidic residues. A compositionally biased stretch (polar residues) spans 389–401 (NHSNSESKSSITE). Over residues 411 to 421 (FSASSARRFSS) the composition is skewed to low complexity. Residue Thr-445 is modified to Phosphothreonine. Residues 466-478 (SSIYRSSSSPRIS) are compositionally biased toward low complexity. Basic and acidic residues predominate over residues 482-491 (DNKDKERENK). The segment covering 623 to 632 (VRDEEAESLR) has biased composition (basic and acidic residues). Over residues 633 to 643 (KARSRQARQTR) the composition is skewed to basic residues. Thr-646 bears the Phosphothreonine mark. Positions 656 to 680 (EAERTFSRSRAERQAQEQPREKPTD) are enriched in basic and acidic residues. Residues 731–742 (TTPASPSTSRPS) are compositionally biased toward low complexity. Residues 743-755 (LYTSSHLLWTNRF) are compositionally biased toward polar residues. Residues 797–807 (ERRRPKERRRG) show a composition bias toward basic residues. Thr-808 is modified (phosphothreonine). Residues 824–836 (EEVKETWHERLSR) show a composition bias toward basic and acidic residues. Ser-839 carries the post-translational modification Phosphoserine. A compositionally biased stretch (polar residues) spans 840–849 (GGSNPTTSDS). 3 stretches are compositionally biased toward basic and acidic residues: residues 850 to 864 (YGDR…EARE), 918 to 927 (AQQKQEKTSD), and 933 to 948 (EMEK…KMSE). Position 947 is a phosphoserine (Ser-947).

PP1 comprises a catalytic subunit, PPP1CA, PPP1CB or PPP1CC, and one or several targeting or regulatory subunits. PPP1R12B mediates binding to myosin. Isoform 3 and isoform 4 bind PPP1R12A, but not isoform 1 of PPP1R12B itself. Binds IL16. Detected in skeletal muscle, fetal and adult heart, brain, placenta, kidney, spleen, thymus, pancreas and lung. Isoform 3 and isoform 4 are heart specific.

The protein localises to the cytoplasm. It is found in the cytoskeleton. It localises to the stress fiber. Functionally, regulates myosin phosphatase activity. Augments Ca(2+) sensitivity of the contractile apparatus. This chain is Protein phosphatase 1 regulatory subunit 12B (PPP1R12B), found in Homo sapiens (Human).